We begin with the raw amino-acid sequence, 393 residues long: Leucine aminopeptidase 1 (393 aa).

Positions 1-18 (MKLSQVSALAACVPAATA) are cleaved as a signal peptide. The propeptide occupies 19-84 (RFVELMEADH…GSQGLRIKES (66 aa)). N176 carries an N-linked (GlcNAc...) asparagine glycan. Zn(2+) contacts are provided by H184, D202, E241, and D268. C317 and C321 are joined by a disulfide. Position 350 (H350) interacts with Zn(2+).

This sequence belongs to the peptidase M28 family. M28E subfamily. In terms of assembly, monomer. Zn(2+) is required as a cofactor.

The protein resides in the secreted. Functionally, extracellular aminopeptidase that allows assimilation of proteinaceous substrates. This Metarhizium robertsii (strain ARSEF 23 / ATCC MYA-3075) (Metarhizium anisopliae (strain ARSEF 23)) protein is Leucine aminopeptidase 1 (LAP1).